A 327-amino-acid polypeptide reads, in one-letter code: Ran-specific GTPase-activating protein 2 (327 aa).

2 disordered regions span residues 1–96 (MSET…KKED) and 109–205 (GFGV…KQEV). The segment covering 24–83 (PIDKLDGTPKRPREKDQDEQAEETSDKSEAPNKNDEEKKEEGKKDQEPSHKKIKVDDGKT) has biased composition (basic and acidic residues). The residue at position 31 (T31) is a Phosphothreonine. The span at 122 to 133 (ATTSTESLPASD) shows a compositional bias: polar residues. Residues 140-152 (FAFGSGLSFGSGF) are compositionally biased toward low complexity. Composition is skewed to basic and acidic residues over residues 157 to 179 (NKTENNSESEKKATDVDKDKVHS) and 189 to 205 (EDTKDKPKPLKLQKQEV). S179 bears the Phosphoserine mark. The RanBD1 domain maps to 191–327 (TKDKPKPLKL…YNIIVKSVPK (137 aa)).

As to quaternary structure, interacts with GSP1, XPO1 and SRM1.

The protein localises to the nucleus. Functionally, important for the export of protein containing nuclear export signal (NES) out of the nucleus. Stimulates the GTPase activity of GSP1. In Saccharomyces cerevisiae (strain ATCC 204508 / S288c) (Baker's yeast), this protein is Ran-specific GTPase-activating protein 2 (YRB2).